The primary structure comprises 298 residues: Pyruvate synthase subunit PorB (298 aa).

[4Fe-4S] cluster contacts are provided by Cys19, Cys22, Cys47, and Cys218.

Heterotetramer of one alpha, one beta, one delta and one gamma chain. [4Fe-4S] cluster serves as cofactor.

The enzyme catalyses 2 oxidized [2Fe-2S]-[ferredoxin] + pyruvate + CoA = 2 reduced [2Fe-2S]-[ferredoxin] + acetyl-CoA + CO2 + H(+). The sequence is that of Pyruvate synthase subunit PorB (porB) from Methanocaldococcus jannaschii (strain ATCC 43067 / DSM 2661 / JAL-1 / JCM 10045 / NBRC 100440) (Methanococcus jannaschii).